Reading from the N-terminus, the 27-residue chain is Cationic protein C1 (27 aa).

The protein localises to the secreted. It is found in the nematocyst. The protein is Cationic protein C1 of Bunodosoma caissarum (Sea anemone).